The following is an 827-amino-acid chain: Putative transcriptional regulatory protein C16G5.16 (827 aa).

The zn(2)-C6 fungal-type DNA-binding region spans 16–42 (CDECHRRKIKCDQRRPCSNCIAYNYEC). Disordered stretches follow at residues 80-114 (LKLP…SSQD), 158-193 (TVPN…HKKP), and 794-827 (QPPS…KRTE). Basic and acidic residues predominate over residues 102–112 (KRSDSSKRSSS). Ser112 is modified (phosphoserine). 2 stretches are compositionally biased toward low complexity: residues 159 to 179 (VPNP…LSFP) and 811 to 827 (SNNS…KRTE).

This sequence belongs to the ASG1 family.

The protein localises to the cytoplasm. It localises to the nucleus. This chain is Putative transcriptional regulatory protein C16G5.16, found in Schizosaccharomyces pombe (strain 972 / ATCC 24843) (Fission yeast).